The sequence spans 181 residues: Large ribosomal subunit protein uL5 (181 aa).

This sequence belongs to the universal ribosomal protein uL5 family. Part of the 50S ribosomal subunit; part of the 5S rRNA/L5/L18/L25 subcomplex. Contacts the 5S rRNA and the P site tRNA. Forms a bridge to the 30S subunit in the 70S ribosome.

In terms of biological role, this is one of the proteins that bind and probably mediate the attachment of the 5S RNA into the large ribosomal subunit, where it forms part of the central protuberance. In the 70S ribosome it contacts protein S13 of the 30S subunit (bridge B1b), connecting the 2 subunits; this bridge is implicated in subunit movement. Contacts the P site tRNA; the 5S rRNA and some of its associated proteins might help stabilize positioning of ribosome-bound tRNAs. This is Large ribosomal subunit protein uL5 from Mycoplasmopsis pulmonis (strain UAB CTIP) (Mycoplasma pulmonis).